The following is a 412-amino-acid chain: Serine hydroxymethyltransferase (412 aa).

(6S)-5,6,7,8-tetrahydrofolate contacts are provided by residues Leu-119 and 123–125 (GHL). Position 228 is an N6-(pyridoxal phosphate)lysine (Lys-228).

Belongs to the SHMT family. In terms of assembly, homodimer. Pyridoxal 5'-phosphate serves as cofactor.

Its subcellular location is the cytoplasm. The enzyme catalyses (6R)-5,10-methylene-5,6,7,8-tetrahydrofolate + glycine + H2O = (6S)-5,6,7,8-tetrahydrofolate + L-serine. Its pathway is one-carbon metabolism; tetrahydrofolate interconversion. The protein operates within amino-acid biosynthesis; glycine biosynthesis; glycine from L-serine: step 1/1. In terms of biological role, catalyzes the reversible interconversion of serine and glycine with tetrahydrofolate (THF) serving as the one-carbon carrier. This reaction serves as the major source of one-carbon groups required for the biosynthesis of purines, thymidylate, methionine, and other important biomolecules. Also exhibits THF-independent aldolase activity toward beta-hydroxyamino acids, producing glycine and aldehydes, via a retro-aldol mechanism. This Thermodesulfovibrio yellowstonii (strain ATCC 51303 / DSM 11347 / YP87) protein is Serine hydroxymethyltransferase.